The chain runs to 409 residues: MAKKTPSIDTKNLTAVQLMELDSCTRCGECVKWCPTYAASGQKPGLAPRDKILRWRQYMNKSYGLKAKLFGPTEIPQSELEEFKDDVHGCTTCGICATVCESGINTVELWESLRTNLVKKGIGPFGKQGMFPKLIGQYHNPYLLDQKDRLAWVPPDVKIADKANIVYFTGCTAGYKQLALAFATSRVLNKLGIEFTMLGEDEWCCGSALIRTGQVHVNDVAKELAKHNVEAIKAKGATKVLYACAGCFRASKVDWPRLLGEELPFEVVHITEFLEDLIKKDKIKWEKSLDKTVTYHDPCHLGRHVGVFEPPRYVLSHIPGVKFVEMDRVKEFQRCCGAGGGVKAGIPDLALSVAESRVKDALDTNADVLSSACPFCKRNLMDGRDSLKADIEVEDVIVLVAQALGLSVE.

2 consecutive 4Fe-4S ferredoxin-type domains span residues 14–44 (TAVQ…GQKP) and 81–110 (EEFK…VELW). 8 residues coordinate [4Fe-4S] cluster: Cys24, Cys27, Cys30, Cys34, Cys90, Cys93, Cys96, and Cys100.

The protein belongs to the HdrD family. In terms of assembly, the dihydromethanophenazine:CoB--CoM heterodisulfide reductase is composed of two subunits; HdrD and HdrE. [4Fe-4S] cluster serves as cofactor.

It carries out the reaction methanophenazine + coenzyme B + coenzyme M = dihydromethanophenazine + coenzyme M-coenzyme B heterodisulfide. It functions in the pathway cofactor metabolism; coenzyme M-coenzyme B heterodisulfide reduction; coenzyme B and coenzyme M from coenzyme M-coenzyme B heterodisulfide: step 1/1. Part of a complex that catalyzes the reversible reduction of CoM-S-S-CoB to the thiol-coenzymes H-S-CoM (coenzyme M) and H-S-CoB (coenzyme B). In Methanosarcina acetivorans (strain ATCC 35395 / DSM 2834 / JCM 12185 / C2A), this protein is Dihydromethanophenazine:CoB--CoM heterodisulfide reductase subunit D (hdrD).